Reading from the N-terminus, the 279-residue chain is RxLR effector protein Avh331 (279 aa).

The N-terminal stretch at 1–20 (MMQWSAILIRTCFSGSGGEA) is a signal peptide. The RxLR-dEER signature appears at 86–106 (RSLRSQATNVDDDANVSIENR). A glycan (N-linked (GlcNAc...) asparagine) is linked at Asn-100. Residues 129-147 (ANKLWLMADVDPKSAFKLL) are W1 motif. Residues 153-174 (GVRFIDNPKMLQWLKFTKAYLD) are Y1 motif. Residues 178 to 208 (SGFGETSAHALLYEKIGGPDLSLLLLSLKDA) are l motif. Positions 222–240 (QFGMWHDARIEPEQLAQTV) are W2 motif. The tract at residues 250–271 (PKNDPKLQVIDDYAKYHRKHRK) is Y2 motif.

Belongs to the RxLR effector family.

It localises to the secreted. The protein resides in the host cell. In terms of biological role, effector that suppresses the host mitogen-activated protein kinase (MAPK)-based plant defense activated by the Phytophthora elicitor to promote colonization of the Phytophthora pathogen. Neither directly inhibits MAPK kinase activity nor interacts with MAPK proteins but acts downstream by suppressing transcriptional activation of resistance marker genes such as FRK1, WRKY22 and WRKY29. Confers avirulence in the presence of resistance protein Rps1k in host. This Phytophthora sojae (strain P6497) (Soybean stem and root rot agent) protein is RxLR effector protein Avh331.